The following is a 250-amino-acid chain: Probable syntaxin-8B (250 aa).

The Cytoplasmic segment spans residues 1–213; the sequence is MGDYWLNEHD…NRRMETIKQN (213 aa). The stretch at 73–100 forms a coiled coil; the sequence is EKELLRRKNKVESLISMKNQLNSTLDAA. The region spanning 148–210 is the t-SNARE coiled-coil homology domain; the sequence is QHIMREQDES…RNANRRMETI (63 aa). Residues 214-234 form a helical; Anchor for type IV membrane protein membrane-spanning segment; that stretch reads AGSTCMIVCIVILIILIVVLI. The Vesicular segment spans residues 235-250; the sequence is ATDSGCKIYNDPKHCP.

This sequence belongs to the syntaxin family.

It localises to the membrane. The polypeptide is Probable syntaxin-8B (syn8B) (Dictyostelium discoideum (Social amoeba)).